Reading from the N-terminus, the 425-residue chain is Proteinase-activated receptor 1 (425 aa).

An N-terminal signal peptide occupies residues 1 to 21; that stretch reads MGPRRLLLVAACLCLCGPLLS. A propeptide spans 22 to 41 (removed for receptor activation); it reads ARTRARRPASKATNATLDPR. N-linked (GlcNAc...) asparagine glycosylation is found at N35, N62, and N75. The Extracellular segment spans residues 42-102; it reads SFLLRNPNDK…SGYLTSSWLT (61 aa). Residues 103–128 traverse the membrane as a helical segment; the sequence is LFVPSVYTGVFVVSLPVNIMAIVVFI. Residues 129 to 137 are Cytoplasmic-facing; it reads LKMKVKKPA. The chain crosses the membrane as a helical span at residues 138-157; it reads VVYMLHLATADVLFVSVLPF. Over 158-176 the chain is Extracellular; sequence KISYYLSGSDWQFGSELCR. A disulfide bond links C175 and C254. A helical membrane pass occupies residues 177-198; that stretch reads FVTAAFYCNMYASILLMTVISI. Over 199–218 the chain is Cytoplasmic; that stretch reads DRFLAVVYPMQSLSWRTLGR. The chain crosses the membrane as a helical span at residues 219-239; that stretch reads ASFTCLAIWALAIAGVVPLLL. Over 240–268 the chain is Extracellular; it reads KEQTIQVPGLNITTCHDVLNETLLEGYYA. Residues N250 and N259 are each glycosylated (N-linked (GlcNAc...) asparagine). A helical transmembrane segment spans residues 269–288; the sequence is YYFSAFSAVFFFVPLIISTV. Topologically, residues 289 to 311 are cytoplasmic; sequence CYVSIIRCLSSSTVANRSKKSRA. The chain crosses the membrane as a helical span at residues 312–334; that stretch reads LFLSAAVFCIFIICFGPTNILLI. Over 335 to 350 the chain is Extracellular; it reads AHYSFLSHTSTTEAAY. The chain crosses the membrane as a helical span at residues 351 to 374; the sequence is FAYLLCVCVSSISCCIDPLIYYYA. Over 375-425 the chain is Cytoplasmic; the sequence is SSECQRYVYSILCCKESSDPSSSNSSGQLMASKMDTCSSNLNNSIYKKLLT. S418 carries the post-translational modification Phosphoserine.

This sequence belongs to the G-protein coupled receptor 1 family. Post-translationally, proteolytic cleavage by thrombin generates a new N-terminus that functions as a tethered ligand. Also proteolytically cleaved by cathepsin CTSG. Cleavage at 41-Arg-|-Ser-42 by CTSG results in receptor activation while cleavage at 55-Phe-|-Trp-56 results in inhibition of receptor activation. In terms of processing, phosphorylated in the C-terminal tail; probably mediating desensitization prior to the uncoupling and internalization of the receptor.

The protein localises to the cell membrane. High affinity receptor that binds the activated thrombin, leading to calcium release from intracellular stores. The thrombin-activated receptor signaling pathway is mediated through PTX-insensitive G proteins, activation of phospholipase C resulting in the production of 1D-myo-inositol 1,4,5-trisphosphate (InsP3) which binds to InsP3 receptors causing calcium release from the stores. In astrocytes, the calcium released into the cytosol allows the Ca(2+)-dependent release of L-glutamate into the synaptic cleft through BEST1, that targets the neuronal postsynaptic GRIN2A/NMDAR receptor resulting in the synaptic plasticity regulation. May play a role in platelets activation and in vascular development. Mediates up-regulation of pro-inflammatory cytokines, such as MCP-1/CCL2 and IL6, triggered by coagulation factor Xa (F10) in cardiac fibroblasts and umbilical vein endothelial cells. This Papio hamadryas (Hamadryas baboon) protein is Proteinase-activated receptor 1.